The following is a 147-amino-acid chain: Cytochrome c-type biogenesis protein CcmE (147 aa).

The Cytoplasmic portion of the chain corresponds to 1 to 7 (MTRKQKR). Residues 8–28 (LSVIVGGLAFLGAATGLTFYA) traverse the membrane as a helical; Signal-anchor for type II membrane protein segment. Topologically, residues 29 to 147 (LGQKASYFYM…KGVWQESKSE (119 aa)) are periplasmic. The heme site is built by H122 and Y126.

Belongs to the CcmE/CycJ family.

It localises to the cell inner membrane. Heme chaperone required for the biogenesis of c-type cytochromes. Transiently binds heme delivered by CcmC and transfers the heme to apo-cytochromes in a process facilitated by CcmF and CcmH. The polypeptide is Cytochrome c-type biogenesis protein CcmE (Mesorhizobium japonicum (strain LMG 29417 / CECT 9101 / MAFF 303099) (Mesorhizobium loti (strain MAFF 303099))).